A 101-amino-acid chain; its full sequence is Urease subunit beta (101 aa).

Belongs to the urease beta subunit family. In terms of assembly, heterotrimer of UreA (gamma), UreB (beta) and UreC (alpha) subunits. Three heterotrimers associate to form the active enzyme.

The protein localises to the cytoplasm. It carries out the reaction urea + 2 H2O + H(+) = hydrogencarbonate + 2 NH4(+). It functions in the pathway nitrogen metabolism; urea degradation; CO(2) and NH(3) from urea (urease route): step 1/1. This chain is Urease subunit beta, found in Ralstonia nicotianae (strain ATCC BAA-1114 / GMI1000) (Ralstonia solanacearum).